A 274-amino-acid chain; its full sequence is Putative 2-succinyl-6-hydroxy-2,4-cyclohexadiene-1-carboxylate synthase (274 aa).

One can recognise an AB hydrolase-1 domain in the interval 26–259; it reads AVVCLHGFTG…KAGHTVHVEQ (234 aa).

Belongs to the AB hydrolase superfamily. MenH family. Monomer.

The enzyme catalyses 5-enolpyruvoyl-6-hydroxy-2-succinyl-cyclohex-3-ene-1-carboxylate = (1R,6R)-6-hydroxy-2-succinyl-cyclohexa-2,4-diene-1-carboxylate + pyruvate. It participates in quinol/quinone metabolism; 1,4-dihydroxy-2-naphthoate biosynthesis; 1,4-dihydroxy-2-naphthoate from chorismate: step 3/7. It functions in the pathway quinol/quinone metabolism; menaquinone biosynthesis. Its function is as follows. Catalyzes a proton abstraction reaction that results in 2,5-elimination of pyruvate from 2-succinyl-5-enolpyruvyl-6-hydroxy-3-cyclohexene-1-carboxylate (SEPHCHC) and the formation of 2-succinyl-6-hydroxy-2,4-cyclohexadiene-1-carboxylate (SHCHC). In Bacillus subtilis (strain 168), this protein is Putative 2-succinyl-6-hydroxy-2,4-cyclohexadiene-1-carboxylate synthase.